A 351-amino-acid polypeptide reads, in one-letter code: Glycerol-1-phosphate dehydrogenase [NAD(P)+] (351 aa).

NAD(+) is bound by residues 97 to 101 (GKVID) and 119 to 122 (TSPS). Position 124 (Asp124) interacts with substrate. Ser128 serves as a coordination point for NAD(+). Asp171 is a substrate binding site. Positions 171 and 251 each coordinate Zn(2+). His255 serves as a coordination point for substrate. Position 267 (His267) interacts with Zn(2+).

Belongs to the glycerol-1-phosphate dehydrogenase family. As to quaternary structure, homodimer. The cofactor is Zn(2+).

The protein resides in the cytoplasm. The catalysed reaction is sn-glycerol 1-phosphate + NAD(+) = dihydroxyacetone phosphate + NADH + H(+). The enzyme catalyses sn-glycerol 1-phosphate + NADP(+) = dihydroxyacetone phosphate + NADPH + H(+). It participates in membrane lipid metabolism; glycerophospholipid metabolism. Catalyzes the NAD(P)H-dependent reduction of dihydroxyacetonephosphate (DHAP or glycerone phosphate) to glycerol 1-phosphate (G1P). The G1P thus generated is used as the glycerophosphate backbone of phospholipids in the cellular membranes of Archaea. The polypeptide is Glycerol-1-phosphate dehydrogenase [NAD(P)+] (Saccharolobus solfataricus (strain ATCC 35092 / DSM 1617 / JCM 11322 / P2) (Sulfolobus solfataricus)).